The following is an 883-amino-acid chain: MIPLLLSLLAALVLTQAPAALADDLKEDSSEDRAFRVRIGATQLRGVLGGALAIPCHVHHLRPPHSRRAAPGFPRVKWTFLSGDREVEVLVARGLRVKVNEAYRFRVALPAYPASLTDVSLVLSELRPNDSGVYRCEVQHGIDDSSDAVEVKVKGVVFLYREGSARYAFSFAGAQEACARIGARIATPEQLYAAYLGGYEQCDAGWLSDQTVRYPIQNPREACSGDMDGYPGVRNYGVVGPDDLYDVYCYAEDLNGELFLGAPPSKLTWEEARDYCLERGAQIASTGQLYAAWNGGLDRCSPGWLADGSVRYPIITPSQRCGGGLPGVKTLFLFPNQTGFPSKQNRFNVYCFRDSAHPSASSEASSPASDGLEAIVTVTEKLEELQLPQEAMESESRGAIYSIPISEDGGGGSSTPEDPAEAPRTPLESETQSIAPPTESSEEEGVALEEEERFKDLEALEEEKEQEDLWVWPRELSSPLPTGSETEHSLSQVSPPAQAVLQLGASPSPGPPRVRGPPAETLLPPREGSPTSTPGGAREVGGETGSPELSGVPRESEEAGSSSLEDGPSLLPATWAPVGPRELETPSEEKSGRTVLAGTSVQAQPVLPTDSASHGGVAVAPSSGDCIPSPCHNGGTCLEEKEGFRCLCLPGYGGDLCDVGLHFCSPGWEAFQGACYKHFSTRRSWEEAESQCRALGAHLTSICTPEEQDFVNDRYREYQWIGLNDRTIEGDFLWSDGAPLLYENWNPGQPDSYFLSGENCVVMVWHDQGQWSDVPCNYHLSYTCKMGLVSCGPPPQLPLAQIFGRPRLRYAVDTVLRYRCRDGLAQRNLPLIRCQENGLWEAPQISCVPRRPGRALRSMDAPEGPRGQLSRHRKAPLTPPSSL.

An N-terminal signal peptide occupies residues 1–22 (MIPLLLSLLAALVLTQAPAALA). The 120-residue stretch at 35-154 (FRVRIGATQL…SSDAVEVKVK (120 aa)) folds into the Ig-like V-type domain. 5 cysteine pairs are disulfide-bonded: Cys-56–Cys-136, Cys-178–Cys-249, Cys-202–Cys-223, Cys-276–Cys-351, and Cys-300–Cys-321. N-linked (GlcNAc...) asparagine glycosylation is present at Asn-129. Link domains follow at residues 156-251 (VVFL…YCYA) and 256-353 (GELF…YCFR). Ser-224 carries the post-translational modification Phosphoserine. The N-linked (GlcNAc...) asparagine glycan is linked to Asn-336. The interval 402–592 (SIPISEDGGG…LETPSEEKSG (191 aa)) is disordered. At Ser-413 the chain carries Phosphoserine. O-linked (Xyl...) (chondroitin sulfate) serine glycosylation occurs at Ser-413. Composition is skewed to acidic residues over residues 440–451 (SSEEEGVALEEE) and 459–468 (ALEEEKEQED). The segment covering 479–495 (PLPTGSETEHSLSQVSP) has biased composition (polar residues). The segment covering 581 to 592 (RELETPSEEKSG) has biased composition (basic and acidic residues). Residues 622-658 (SSGDCIPSPCHNGGTCLEEKEGFRCLCLPGYGGDLCD) form the EGF-like domain. Disulfide bonds link Cys-626–Cys-637, Cys-631–Cys-646, Cys-648–Cys-657, Cys-664–Cys-675, Cys-692–Cys-784, Cys-760–Cys-776, Cys-791–Cys-834, and Cys-820–Cys-847. The region spanning 658–786 (DVGLHFCSPG…NYHLSYTCKM (129 aa)) is the C-type lectin domain. Residues 789-849 (VSCGPPPQLP…WEAPQISCVP (61 aa)) form the Sushi domain. The disordered stretch occupies residues 854 to 883 (RALRSMDAPEGPRGQLSRHRKAPLTPPSSL).

It belongs to the aggrecan/versican proteoglycan family. As to quaternary structure, interacts with TNR. Post-translationally, O-glycosylated; contains chondroitin sulfate. As to expression, expressed in the retina, specifically around the inner and outer segments of photoreceptors, retinal pigment epithelium, outer plexiform layer, and the ganglion cell layer (at protein level). Brain. Expressed in the brainstem and cerebellum in a perineuronal net pattern.

It localises to the secreted. It is found in the extracellular space. The protein localises to the extracellular matrix. Its function is as follows. May play a role in the terminally differentiating and the adult nervous system during postnatal development. Could stabilize interactions between hyaluronan (HA) and brain proteoglycans. The chain is Brevican core protein (Bcan) from Mus musculus (Mouse).